Consider the following 294-residue polypeptide: Large ribosomal subunit protein uL4m (294 aa).

Positions 120-139 are disordered; it reads VRGGGRKPWQQKGSGRARHG. The residue at position 147 (Arg-147) is an Omega-N-methylarginine.

Belongs to the universal ribosomal protein uL4 family. In terms of assembly, component of the mitochondrial ribosome large subunit (39S) which comprises a 16S rRNA and about 50 distinct proteins. Interacts with MIEF1 upstream open reading frame protein.

The protein localises to the mitochondrion. The polypeptide is Large ribosomal subunit protein uL4m (MRPL4) (Bos taurus (Bovine)).